A 286-amino-acid chain; its full sequence is Beta-lactamase SHV-46 (286 aa).

A signal peptide spans 1–21; the sequence is MRYIRLCIISLLATLPLAVHA. The Acyl-ester intermediate role is filled by serine 66. Cysteines 73 and 119 form a disulfide. Glutamate 164 serves as the catalytic Proton acceptor. A substrate-binding site is contributed by 230–232; it reads KTG.

The protein belongs to the class-A beta-lactamase family.

The catalysed reaction is a beta-lactam + H2O = a substituted beta-amino acid. This is Beta-lactamase SHV-46 (bla) from Klebsiella oxytoca.